Here is a 135-residue protein sequence, read N- to C-terminus: Small ribosomal subunit protein bS6 (135 aa).

Positions 99-135 are disordered; it reads EKSAMLSHLDRNAHAGQDEERSRSPRRQRENAIERVE.

Belongs to the bacterial ribosomal protein bS6 family.

Functionally, binds together with bS18 to 16S ribosomal RNA. The polypeptide is Small ribosomal subunit protein bS6 (Bartonella tribocorum (strain CIP 105476 / IBS 506)).